A 138-amino-acid chain; its full sequence is Acidic phospholipase A2 BE-I-PLA2 (138 aa).

The N-terminal stretch at 1-16 (MRTLWIMAVLLVGVEG) is a signal peptide. 7 disulfides stabilise this stretch: cysteine 42–cysteine 131, cysteine 44–cysteine 60, cysteine 59–cysteine 111, cysteine 65–cysteine 138, cysteine 66–cysteine 104, cysteine 73–cysteine 97, and cysteine 91–cysteine 102. Residues tyrosine 43, glycine 45, and glycine 47 each coordinate Ca(2+). Histidine 63 is an active-site residue. Residue aspartate 64 coordinates Ca(2+). The active site involves aspartate 105.

It belongs to the phospholipase A2 family. Group II subfamily. D49 sub-subfamily. Ca(2+) serves as cofactor. Expressed by the venom gland.

The protein resides in the secreted. The enzyme catalyses a 1,2-diacyl-sn-glycero-3-phosphocholine + H2O = a 1-acyl-sn-glycero-3-phosphocholine + a fatty acid + H(+). Its function is as follows. Snake venom phospholipase A2 that shows a potent inhibition of human platelet aggregation. This inhibition is concentration-dependent when aggregation is induced by collagen, and concentration-independent when aggregation is induced by arachidonic acid. In human umbilical-cord vein endothelial cells, this toxin stimulates endothelial cells to release prostaglandin I(2), suggesting an increase of its potential anti-platelet activity in vivo. PLA2 catalyzes the calcium-dependent hydrolysis of the 2-acyl groups in 3-sn-phosphoglycerides. The protein is Acidic phospholipase A2 BE-I-PLA2 of Bothrops erythromelas (Caatinga lance head).